An 88-amino-acid polypeptide reads, in one-letter code: MIAAEQKKQIISNFARKAGDTGSTEVQIALIDARIKELNEHFKSHKKDFHSKTGLLRLVGKRKKLLDYLKRTELDRYKKLIETLGLRK.

This sequence belongs to the universal ribosomal protein uS15 family. Part of the 30S ribosomal subunit. Forms a bridge to the 50S subunit in the 70S ribosome, contacting the 23S rRNA.

Its function is as follows. One of the primary rRNA binding proteins, it binds directly to 16S rRNA where it helps nucleate assembly of the platform of the 30S subunit by binding and bridging several RNA helices of the 16S rRNA. Forms an intersubunit bridge (bridge B4) with the 23S rRNA of the 50S subunit in the ribosome. The polypeptide is Small ribosomal subunit protein uS15 (Leptospira borgpetersenii serovar Hardjo-bovis (strain JB197)).